Consider the following 196-residue polypeptide: MTTILRIDSSIKGEAAVSRRLTQRILDRLLEAHPDATVVSRDLAQGIRQIDGPWLGSVFTAPEQRTADQQEIARTAGAVMAEVKEADILVIALPVYNFGAPAQLKSWVDHIARRGESFVYTETGPVGLLTGKRAIVAFTSDGTPLGSELDHASGWLRQVLGFVGITDVDFVAADRMVFGADEAMARAEAAVAALAA.

Residue S10 coordinates FMN.

It belongs to the azoreductase type 1 family. In terms of assembly, homodimer. FMN serves as cofactor.

It carries out the reaction 2 a quinone + NADH + H(+) = 2 a 1,4-benzosemiquinone + NAD(+). The catalysed reaction is N,N-dimethyl-1,4-phenylenediamine + anthranilate + 2 NAD(+) = 2-(4-dimethylaminophenyl)diazenylbenzoate + 2 NADH + 2 H(+). Quinone reductase that provides resistance to thiol-specific stress caused by electrophilic quinones. Functionally, also exhibits azoreductase activity. Catalyzes the reductive cleavage of the azo bond in aromatic azo compounds to the corresponding amines. This Cereibacter sphaeroides (strain ATCC 17023 / DSM 158 / JCM 6121 / CCUG 31486 / LMG 2827 / NBRC 12203 / NCIMB 8253 / ATH 2.4.1.) (Rhodobacter sphaeroides) protein is FMN-dependent NADH:quinone oxidoreductase.